The sequence spans 468 residues: TFIIA-alpha and beta-like factor (468 aa).

Disordered stretches follow at residues 215-236 (DRRL…LSLP) and 379-416 (DSVS…SEQD). A compositionally biased stretch (polar residues) spans 380 to 391 (SVSNEDSTANSS). Residues 401–416 (PEEDPLNSGDDVSEQD) are compositionally biased toward acidic residues.

The protein belongs to the TFIIA subunit 1 family. As to expression, testis specific. Expressed in pachytene spermatocytes and haploid spermatids.

The protein resides in the nucleus. May function as a testis specific transcription factor. Binds DNA in conjunction with GTF2A2 and TBP (the TATA-binding protein) and together with GTF2A2, allows mRNA transcription. In Mus musculus (Mouse), this protein is TFIIA-alpha and beta-like factor (Gtf2a1l).